The chain runs to 1020 residues: Carbamoyl phosphate synthase arginine-specific large chain (1020 aa).

The interval 1-401 (MPKNNAIHSI…ATLKAIASLE (401 aa)) is carboxyphosphate synthetic domain. The ATP site is built by Arg129, Arg169, Gly175, Gly176, Gln208, Ile210, Glu215, Gly241, Ile242, His243, Gln284, and Glu298. One can recognise an ATP-grasp 1 domain in the interval 133–327 (KTLMKRLHQP…IAKIAADIAI (195 aa)). Mg(2+)-binding residues include Gln284, Glu298, and Asn300. Mn(2+) is bound by residues Gln284, Glu298, and Asn300. 2 oligomerization domain regions span residues 402–542 (IDPK…FGQT) and 402–544 (IDPK…QTNE). Carbamoyl phosphate synthetic domain regions lie at residues 543–927 (NESH…ADSY) and 544–927 (ESHP…ADSY). An ATP-grasp 2 domain is found at 669–858 (ADCLRLLKIA…LAQLATRLIL (190 aa)). The ATP site is built by Arg705, Gln744, Leu746, Glu750, Gly775, Val776, His777, Ser778, and Gln818. Residues Gln818 and Asn831 each coordinate Mg(2+). 2 residues coordinate Mn(2+): Gln818 and Asn831. One can recognise an MGS-like domain in the interval 927 to 1020 (YHLETWQTVD…LAVTPTPATI (94 aa)). The segment at 928-1020 (HLETWQTVDG…LAVTPTPATI (93 aa)) is allosteric domain.

The protein belongs to the CarB family. Composed of two chains; the small (or glutamine) chain promotes the hydrolysis of glutamine to ammonia, which is used by the large (or ammonia) chain to synthesize carbamoyl phosphate. Tetramer of heterodimers (alpha,beta)4. Requires Mg(2+) as cofactor. The cofactor is Mn(2+).

It catalyses the reaction hydrogencarbonate + L-glutamine + 2 ATP + H2O = carbamoyl phosphate + L-glutamate + 2 ADP + phosphate + 2 H(+). The catalysed reaction is hydrogencarbonate + NH4(+) + 2 ATP = carbamoyl phosphate + 2 ADP + phosphate + 2 H(+). The protein operates within amino-acid biosynthesis; L-arginine biosynthesis; carbamoyl phosphate from bicarbonate: step 1/1. In terms of biological role, large subunit of the glutamine-dependent carbamoyl phosphate synthetase (CPSase). CPSase catalyzes the formation of carbamoyl phosphate from the ammonia moiety of glutamine, carbonate, and phosphate donated by ATP, constituting the first step of the biosynthetic pathway leading to arginine and/or urea. The large subunit (synthetase) binds the substrates ammonia (free or transferred from glutamine from the small subunit), hydrogencarbonate and ATP and carries out an ATP-coupled ligase reaction, activating hydrogencarbonate by forming carboxy phosphate which reacts with ammonia to form carbamoyl phosphate. The polypeptide is Carbamoyl phosphate synthase arginine-specific large chain (Lactiplantibacillus plantarum (strain ATCC BAA-793 / NCIMB 8826 / WCFS1) (Lactobacillus plantarum)).